Here is a 653-residue protein sequence, read N- to C-terminus: Splicing factor 1 (653 aa).

Disordered stretches follow at residues methionine 1–leucine 44 and leucine 65–leucine 94. N-acetylalanine is present on alanine 2. Residue serine 14 is modified to Phosphoserine. Residues lysine 15–arginine 19 carry the Nuclear localization signal motif. The residue at position 20 (serine 20) is a Phosphoserine; by PKG. Residues serine 80 and serine 82 each carry the phosphoserine modification. Position 87 is a phosphotyrosine (tyrosine 87). A Phosphoserine modification is found at serine 89. The KH domain maps to methionine 141–isoleucine 222. The segment at threonine 277–arginine 296 adopts a CCHC-type zinc-finger fold. Disordered stretches follow at residues valine 325 to proline 584 and arginine 611 to alanine 653. A compositionally biased stretch (low complexity) spans proline 335–alanine 350. Over residues methionine 382 to proline 394 the composition is skewed to gly residues. Composition is skewed to pro residues over residues asparagine 418–methionine 447 and methionine 470–proline 499. Low complexity predominate over residues serine 515 to threonine 534. Positions valine 567–proline 584 are enriched in pro residues.

Belongs to the BBP/SF1 family. As to quaternary structure, binds U2AF2. Interacts with U1 snRNA. Interacts with RBM17. Binds EWSR1, FUS and TAF15. In terms of processing, phosphorylation on Ser-20 interferes with U2AF2 binding and spliceosome assembly. Detected at intermediate levels in spleen. Lower levels in heart, kidney, brain, liver, testis, bone marrow, adrenal gland, lymph nodes, pancreas and thymus.

It is found in the nucleus. In terms of biological role, necessary for the ATP-dependent first step of spliceosome assembly. Binds to the intron branch point sequence (BPS) 5'-UACUAAC-3' of the pre-mRNA. May act as transcription repressor. The sequence is that of Splicing factor 1 (Sf1) from Mus musculus (Mouse).